A 122-amino-acid polypeptide reads, in one-letter code: Large ribosomal subunit protein uL14c (122 aa).

Belongs to the universal ribosomal protein uL14 family. Part of the 50S ribosomal subunit.

The protein resides in the plastid. It is found in the chloroplast. In terms of biological role, binds to 23S rRNA. The polypeptide is Large ribosomal subunit protein uL14c (Lactuca sativa (Garden lettuce)).